The following is a 260-amino-acid chain: GTP cyclohydrolase FolE2 (260 aa).

Belongs to the GTP cyclohydrolase IV family.

It catalyses the reaction GTP + H2O = 7,8-dihydroneopterin 3'-triphosphate + formate + H(+). It functions in the pathway cofactor biosynthesis; 7,8-dihydroneopterin triphosphate biosynthesis; 7,8-dihydroneopterin triphosphate from GTP: step 1/1. Converts GTP to 7,8-dihydroneopterin triphosphate. The polypeptide is GTP cyclohydrolase FolE2 (Desulfosudis oleivorans (strain DSM 6200 / JCM 39069 / Hxd3) (Desulfococcus oleovorans)).